Reading from the N-terminus, the 369-residue chain is Isocitrate dehydrogenase [NAD] subunit 2, mitochondrial (369 aa).

A mitochondrion-targeting transit peptide spans 1 to 15 (MLRNTFFRNTSRRFL). Phosphothreonine is present on threonine 105. 3 residues coordinate substrate: arginine 119, arginine 129, and arginine 150. Threonine 153 carries the phosphothreonine modification. Residue aspartate 237 participates in substrate binding. Mg(2+)-binding residues include aspartate 237, aspartate 263, and aspartate 267. A phosphothreonine mark is found at threonine 327 and threonine 349.

This sequence belongs to the isocitrate and isopropylmalate dehydrogenases family. Octamer of two non-identical subunits IDH1 and IDH2. Mg(2+) is required as a cofactor. Requires Mn(2+) as cofactor.

The protein localises to the mitochondrion matrix. It carries out the reaction D-threo-isocitrate + NAD(+) = 2-oxoglutarate + CO2 + NADH. Its activity is regulated as follows. Allosterically regulated by several compounds including AMP, NAD(+), and citrate. Its function is as follows. Performs an essential role in the oxidative function of the citric acid cycle. Also binds RNA; specifically to the 5'-untranslated leaders of mitochondrial mRNAs. The chain is Isocitrate dehydrogenase [NAD] subunit 2, mitochondrial (IDH2) from Saccharomyces cerevisiae (strain ATCC 204508 / S288c) (Baker's yeast).